The sequence spans 153 residues: Putative ATP synthase subunit f, mitochondrial (153 aa).

It belongs to the ATPase F chain family. In terms of assembly, subunit of the F-type ATPase which has 2 components, CF(1) - the catalytic core - and CF(0) - the membrane proton channel.

It is found in the mitochondrion membrane. Mitochondrial membrane ATP synthase (F(1)F(0) ATP synthase or Complex V) produces ATP from ADP in the presence of a proton gradient across the membrane which is generated by electron transport complexes of the respiratory chain. F-type ATPases consist of two structural domains, F(1) - containing the extramembraneous catalytic core and F(0) - containing the membrane proton channel, linked together by a central stalk and a peripheral stalk. During catalysis, ATP synthesis in the catalytic domain of F(1) is coupled via a rotary mechanism of the central stalk subunits to proton translocation. Part of the complex F(0) domain. Minor subunit located with subunit a in the membrane. The polypeptide is Putative ATP synthase subunit f, mitochondrial (Caenorhabditis elegans).